Consider the following 437-residue polypeptide: 3-phosphoshikimate 1-carboxyvinyltransferase (437 aa).

Residues Lys21, Ser22, and Arg26 each coordinate 3-phosphoshikimate. Lys21 lines the phosphoenolpyruvate pocket. Phosphoenolpyruvate is bound by residues Gly101 and Arg129. 3-phosphoshikimate is bound by residues Ser172, Ser173, Gln174, Ser200, Asp314, and Lys341. Gln174 provides a ligand contact to phosphoenolpyruvate. The active-site Proton acceptor is Asp314. The phosphoenolpyruvate site is built by Arg345, Arg388, and Lys414.

The protein belongs to the EPSP synthase family. Monomer.

The protein resides in the cytoplasm. It catalyses the reaction 3-phosphoshikimate + phosphoenolpyruvate = 5-O-(1-carboxyvinyl)-3-phosphoshikimate + phosphate. It participates in metabolic intermediate biosynthesis; chorismate biosynthesis; chorismate from D-erythrose 4-phosphate and phosphoenolpyruvate: step 6/7. Catalyzes the transfer of the enolpyruvyl moiety of phosphoenolpyruvate (PEP) to the 5-hydroxyl of shikimate-3-phosphate (S3P) to produce enolpyruvyl shikimate-3-phosphate and inorganic phosphate. The polypeptide is 3-phosphoshikimate 1-carboxyvinyltransferase (Clostridioides difficile (strain 630) (Peptoclostridium difficile)).